A 530-amino-acid polypeptide reads, in one-letter code: 6-phosphofructo-2-kinase/fructose-2,6-bisphosphatase 2 (530 aa).

The segment covering 1–15 has biased composition (polar residues); that stretch reads MSGASSSEQNNNSYE. The segment at 1-21 is disordered; that stretch reads MSGASSSEQNNNSYETKPPNL. S2 carries the N-acetylserine modification. Residues 2–248 form a 6-phosphofructo-2-kinase region; sequence SGASSSEQNN…VYYLMNIHVQ (247 aa). S29 is subject to Phosphoserine; by PKA. 45-53 serves as a coordination point for ATP; sequence GLPARGKTY. Beta-D-fructose 6-phosphate contacts are provided by R78 and R102. Residue D128 is part of the active site. T130 and R136 together coordinate beta-D-fructose 6-phosphate. C158 is an active-site residue. ATP is bound at residue 167–172; that stretch reads NILEVK. Beta-D-fructose 6-phosphate contacts are provided by K172, R193, and Y197. The segment at 249 to 530 is fructose-2,6-bisphosphatase; it reads PRTIYLCRHG…PPALASCPCH (282 aa). R256 lines the beta-D-fructose 2,6-bisphosphate pocket. H257 functions as the Tele-phosphohistidine intermediate in the catalytic mechanism. Residue G269 coordinates beta-D-fructose 2,6-bisphosphate. E326 serves as the catalytic Proton donor/acceptor. Residues Y337, R351, K355, Y366, Q392, and R396 each contribute to the beta-D-fructose 2,6-bisphosphate site. 348 to 351 provides a ligand contact to ATP; that stretch reads FALR. Residues 392–396 and Y428 each bind ATP; that span reads QAVMR. The segment at 446–512 is disordered; it reads RDKPTNNFPK…GPTSRRPKSH (67 aa). The span at 450-476 shows a compositional bias: polar residues; that stretch reads TNNFPKNQTPVRMRRNSFTPLSSSNTI. A Phosphoserine; by AMPK and PKA modification is found at S466. T468 is subject to Phosphothreonine. The residue at position 475 (T475) is a Phosphothreonine; by PKC. Phosphoserine occurs at positions 483 and 493.

In the C-terminal section; belongs to the phosphoglycerate mutase family. In terms of assembly, homodimer. Forms a heterodimer with PFKFB3. In terms of processing, phosphorylation by AMPK stimulates activity.

It catalyses the reaction beta-D-fructose 2,6-bisphosphate + H2O = beta-D-fructose 6-phosphate + phosphate. The enzyme catalyses beta-D-fructose 6-phosphate + ATP = beta-D-fructose 2,6-bisphosphate + ADP + H(+). Its activity is regulated as follows. Phosphorylation results in the activation of the kinase activity. Functionally, synthesis and degradation of fructose 2,6-bisphosphate. This is 6-phosphofructo-2-kinase/fructose-2,6-bisphosphatase 2 (PFKFB2) from Pongo abelii (Sumatran orangutan).